The sequence spans 146 residues: Deoxyuridine 5'-triphosphate nucleotidohydrolase (146 aa).

Substrate is bound by residues Arg-65–Gly-67, Asn-78, and Thr-82–Asp-84.

It belongs to the dUTPase family. Mg(2+) serves as cofactor.

The catalysed reaction is dUTP + H2O = dUMP + diphosphate + H(+). It functions in the pathway pyrimidine metabolism; dUMP biosynthesis; dUMP from dCTP (dUTP route): step 2/2. This enzyme is involved in nucleotide metabolism: it produces dUMP, the immediate precursor of thymidine nucleotides and it decreases the intracellular concentration of dUTP so that uracil cannot be incorporated into DNA. The protein is Deoxyuridine 5'-triphosphate nucleotidohydrolase of Treponema pallidum subsp. pallidum (strain SS14).